A 305-amino-acid polypeptide reads, in one-letter code: DNA-directed RNA polymerase 35 kDa subunit (305 aa).

The protein belongs to the poxviridae DNA-directed RNA polymerase 35 kDa subunit family. The DNA-dependent RNA polymerase used for intermediate and late genes expression consists of eight subunits 147 kDa, 133 kDa, 35 kDa, 30 kDa, 22 kDa, 19 kDa, 18 kDa and 7 kDa totalling more than 500 kDa in mass. The same holoenzyme, with the addition of the transcription-specificity factor RAP94, is used for early gene expression.

The protein resides in the virion. The catalysed reaction is RNA(n) + a ribonucleoside 5'-triphosphate = RNA(n+1) + diphosphate. Functionally, part of the DNA-dependent RNA polymerase which catalyzes the transcription of viral DNA into RNA using the four ribonucleoside triphosphates as substrates. Responsible for the transcription of early, intermediate and late genes. DNA-dependent RNA polymerase associates with the early transcription factor (ETF), itself composed of D6 and A7, thereby allowing the early genes transcription. Late transcription, and probably also intermediate transcription, require newly synthesized RNA polymerase. The sequence is that of DNA-directed RNA polymerase 35 kDa subunit (OPG156) from Bos taurus (Bovine).